We begin with the raw amino-acid sequence, 837 residues long: Anaphase-promoting complex subunit 4 (837 aa).

2 stretches are compositionally biased toward low complexity: residues 59–81 and 547–581; these read NDNN…NDNN and SSSS…NNNN. Disordered stretches follow at residues 59-89 and 547-588; these read NDNN…KSNK and SSSS…QSGN.

The protein belongs to the APC4 family. As to quaternary structure, the APC/C is composed of at least 13 subunits that stay tightly associated throughout the cell cycle: anapc1, anapc2, anapc3, anapc4, anapc5, anapc6, anapc7, anapc8, anapc10, anapc11, cdc20, cdc26 and cdh1.

Its subcellular location is the nucleus. The protein operates within protein modification; protein ubiquitination. In terms of biological role, component of the anaphase promoting complex/cyclosome (APC/C), a cell cycle-regulated E3 ubiquitin-protein ligase complex that controls progression through mitosis and the G1 phase of the cell cycle. This Dictyostelium discoideum (Social amoeba) protein is Anaphase-promoting complex subunit 4 (anapc4).